Here is a 465-residue protein sequence, read N- to C-terminus: Protein hedgehog (465 aa).

A lipid anchor (N-palmitoyl cysteine) is attached at cysteine 79. Ca(2+)-binding residues include glutamate 143, glutamate 144, aspartate 149, threonine 179, glutamate 180, aspartate 183, and aspartate 185. Glycine 251 carries the Cholesterol glycine ester lipid modification.

Belongs to the hedgehog family. In terms of assembly, interacts with shf. The C-terminal part of the hedgehog protein precursor displays an autoproteolysis activity that results in the cleavage of the full-length protein into two parts (N-product and C-product). In addition, the C-terminal part displays a cholesterol transferase activity that results by the covalent attachment of a cholesterol moiety to the C-terminal of the newly generated N-product. The N-product is the active species in both local and long-range signaling, whereas the C-product has no signaling activity. In terms of processing, cholesterylation is required for N-product targeting to lipid rafts and multimerization. Post-translationally, N-palmitoylation by Rasp of the hedgehog N-product, within the secretory pathway, is required for the embryonic and larval patterning activities of the hedgehog signal.

Its subcellular location is the nucleus. It localises to the cytoplasm. It is found in the cell membrane. It carries out the reaction glycyl-L-cysteinyl-[protein] + cholesterol + H(+) = [protein]-C-terminal glycyl cholesterol ester + N-terminal L-cysteinyl-[protein]. Its function is as follows. The C-terminal part of the hedgehog protein precursor displays an autoproteolysis activity that results in the cleavage of the full-length protein into two parts (N-product and C-product). In addition, the C-terminal part displays a cholesterol transferase activity that results by the covalent attachment of a cholesterol moiety to the C-terminal of the newly generated N-product. Once cleaved, the C-product has no signaling activity and diffuses from the cell. In terms of biological role, the dually lipidated hedgehog protein N-product is a morphogen which is essential for a variety of patterning events during development. Establishes the anterior-posterior axis of the embryonic segments and patterns the larval imaginal disks. Binds to the patched (ptc) receptor, which functions in association with smoothened (smo), to activate the transcription of target genes wingless (wg), decapentaplegic (dpp) and ptc. In the absence of hh, ptc represses the constitutive signaling activity of smo through fused (fu). Essential component of a signaling pathway which regulates the Duox-dependent gut immune response to bacterial uracil; required to activate Cad99C-dependent endosome formation, norpA-dependent Ca2+ mobilization and p38 MAPK, which are essential steps in the Duox-dependent production of reactive oxygen species (ROS) in response to intestinal bacterial infection. During photoreceptor differentiation, it up-regulates transcription of Ubr3, which in turn promotes the hh-signaling pathway by mediating the ubiquitination and degradation of cos. The polypeptide is Protein hedgehog (Drosophila erecta (Fruit fly)).